The primary structure comprises 217 residues: Glutathione S-transferase (217 aa).

In terms of domain architecture, GST N-terminal spans 2–82; the sequence is TIKVHGNPRS…YLAYTHDHQN (81 aa). Residues Ser11, 40–41, 53–54, and 66–67 each bind glutathione; these read HK, QV, and ES. A GST C-terminal domain is found at 91–217; that stretch reads EKHEMAAQLV…EKTLALQKQA (127 aa).

The protein belongs to the GST superfamily. Phi family.

It is found in the cytoplasm. It catalyses the reaction RX + glutathione = an S-substituted glutathione + a halide anion + H(+). In terms of biological role, conjugation of reduced glutathione to a wide number of exogenous and endogenous hydrophobic electrophiles. The sequence is that of Glutathione S-transferase (GST) from Silene vulgaris (Bladder campion).